A 299-amino-acid chain; its full sequence is NAD(+) hydrolase PdTIR (299 aa).

The TIR domain occupies 164 to 297 (PPHDIFISHA…EIVADLMAII (134 aa)). Residues 173 to 174 (AW) and Arg-203 contribute to the NAD(+) site. Glu-239 is a catalytic residue.

In terms of assembly, homodimer. Interacts with host MYD88.

It carries out the reaction NAD(+) + H2O = ADP-D-ribose + nicotinamide + H(+). NAD(+) hydrolase (NADase) that catalyzes cleavage of NAD(+) into ADP-D-ribose (ADPR) and nicotinamide. This chain is NAD(+) hydrolase PdTIR, found in Paracoccus denitrificans (strain Pd 1222).